The chain runs to 140 residues: Lysozyme D (140 aa).

An N-terminal signal peptide occupies residues 1-18; that stretch reads MKAFIVLVALACAAPAFG. Positions 19-140 constitute a C-type lysozyme domain; that stretch reads RTMDRCSLAR…GWLPSIDDCF (122 aa). Disulfide bonds link Cys-24/Cys-139, Cys-45/Cys-129, Cys-80/Cys-96, and Cys-92/Cys-110. Active-site residues include Glu-50 and Asp-68.

It belongs to the glycosyl hydrolase 22 family. As to expression, found in the midgut.

The catalysed reaction is Hydrolysis of (1-&gt;4)-beta-linkages between N-acetylmuramic acid and N-acetyl-D-glucosamine residues in a peptidoglycan and between N-acetyl-D-glucosamine residues in chitodextrins.. Its function is as follows. Unlikely to play an active role in the humoral immune defense. May have a function in the digestion of bacteria in the food. This Drosophila melanogaster (Fruit fly) protein is Lysozyme D (LysD).